A 30-amino-acid polypeptide reads, in one-letter code: 2S seed storage-like protein (30 aa).

This sequence belongs to the 2S seed storage albumins family. In terms of assembly, the mature protein is a heterodimer of a small and a large chain linked by 2 disulfide bonds. Extracted from castor bean.

Its function is as follows. This is a 2S seed storage protein. Inhibits spore germination in R.solani and F.oxysporum. Exhibits anti-trypsin activity. In Ricinus communis (Castor bean), this protein is 2S seed storage-like protein.